A 313-amino-acid polypeptide reads, in one-letter code: NAD-capped RNA hydrolase NudC (313 aa).

Arginine 111 serves as a coordination point for substrate. The Nudix hydrolase domain maps to proline 168–leucine 293. A divalent metal cation is bound by residues alanine 202, glutamate 218, and glutamate 222. Positions glycine 203–glycine 224 match the Nudix box motif. Glutamine 236–serine 243 contacts substrate. Glutamate 264 provides a ligand contact to a divalent metal cation.

This sequence belongs to the Nudix hydrolase family. NudC subfamily. In terms of assembly, homodimer. It depends on Mg(2+) as a cofactor. Mn(2+) is required as a cofactor.

The enzyme catalyses a 5'-end NAD(+)-phospho-ribonucleoside in mRNA + H2O = a 5'-end phospho-adenosine-phospho-ribonucleoside in mRNA + beta-nicotinamide D-ribonucleotide + 2 H(+). It catalyses the reaction NAD(+) + H2O = beta-nicotinamide D-ribonucleotide + AMP + 2 H(+). The catalysed reaction is NADH + H2O = reduced beta-nicotinamide D-ribonucleotide + AMP + 2 H(+). Its function is as follows. mRNA decapping enzyme that specifically removes the nicotinamide adenine dinucleotide (NAD) cap from a subset of mRNAs by hydrolyzing the diphosphate linkage to produce nicotinamide mononucleotide (NMN) and 5' monophosphate mRNA. The NAD-cap is present at the 5'-end of some mRNAs and stabilizes RNA against 5'-processing. Has preference for mRNAs with a 5'-end purine. Catalyzes the hydrolysis of a broad range of dinucleotide pyrophosphates. The protein is NAD-capped RNA hydrolase NudC of Mycobacterium bovis (strain ATCC BAA-935 / AF2122/97).